Here is a 542-residue protein sequence, read N- to C-terminus: Protein MGF 505-11L (542 aa).

This sequence belongs to the asfivirus MGF 505 family.

Its function is as follows. Plays a role in virus cell tropism, and may be required for efficient virus replication in macrophages. The sequence is that of Protein MGF 505-11L from African swine fever virus (isolate Tick/Malawi/Lil 20-1/1983) (ASFV).